Here is a 203-residue protein sequence, read N- to C-terminus: MIDSLNTLVPMVVEQTARGERAYDIYSRLLKERVVFLVGPVEDHMANLVVAQLLFLESENPDKDIHLYINSPGGSVTAGLSIYDTMQFIKPDVSTLCVGQAASMGAVLLAGGAGGKRHCLPHSRLLIHQPLGGFQGQATDIDIHAREILLVRERLNHILAKHTGQPIEKIQHDTDRDYFMSATESLAYGLVDSVLKQRAEISL.

The active-site Nucleophile is the Ser-103. His-128 is a catalytic residue.

Belongs to the peptidase S14 family. Fourteen ClpP subunits assemble into 2 heptameric rings which stack back to back to give a disk-like structure with a central cavity, resembling the structure of eukaryotic proteasomes.

The protein localises to the cytoplasm. The catalysed reaction is Hydrolysis of proteins to small peptides in the presence of ATP and magnesium. alpha-casein is the usual test substrate. In the absence of ATP, only oligopeptides shorter than five residues are hydrolyzed (such as succinyl-Leu-Tyr-|-NHMec, and Leu-Tyr-Leu-|-Tyr-Trp, in which cleavage of the -Tyr-|-Leu- and -Tyr-|-Trp bonds also occurs).. Its function is as follows. Cleaves peptides in various proteins in a process that requires ATP hydrolysis. Has a chymotrypsin-like activity. Plays a major role in the degradation of misfolded proteins. This is ATP-dependent Clp protease proteolytic subunit from Nitrosococcus oceani (strain ATCC 19707 / BCRC 17464 / JCM 30415 / NCIMB 11848 / C-107).